The primary structure comprises 612 residues: UvrABC system protein C (612 aa).

A GIY-YIG domain is found at 18–96 (TRPGVYRMMD…IKTLKPPYNI (79 aa)). The UVR domain occupies 208–243 (PEIINETIQQMEVASAQLDFERAAVLRDQVDYLRRV).

It belongs to the UvrC family. As to quaternary structure, interacts with UvrB in an incision complex.

Its subcellular location is the cytoplasm. Its function is as follows. The UvrABC repair system catalyzes the recognition and processing of DNA lesions. UvrC both incises the 5' and 3' sides of the lesion. The N-terminal half is responsible for the 3' incision and the C-terminal half is responsible for the 5' incision. This Hahella chejuensis (strain KCTC 2396) protein is UvrABC system protein C.